A 94-amino-acid chain; its full sequence is CRISPR-associated endoribonuclease Cas2 (94 aa).

This sequence belongs to the CRISPR-associated endoribonuclease Cas2 protein family. E.coli-subtype subfamily. Homodimer. Part of the Cas1-Cas2 complex. Forms a hexamer with 2 Cas1 dimers sandwiching a Cas2 dimer. The DNA lies across a flat surface extending from 1 Cas1 dimer, across the Cas2 dimer and contacting the other Cas1 dimer. Only 1 Cas1 protein from each dimer is catalytic, the other interacts with the Cas2 dimer and possibly target DNA.

Its function is as follows. CRISPR (clustered regularly interspaced short palindromic repeat), is an adaptive immune system that provides protection against mobile genetic elements (viruses, transposable elements and conjugative plasmids). CRISPR clusters contain sequences complementary to antecedent mobile elements and target invading nucleic acids. CRISPR clusters are transcribed and processed into CRISPR RNA (crRNA). The Cas1-Cas2 complex is involved in CRISPR adaptation, the first stage of CRISPR immunity, being required for the addition/removal of CRISPR spacers at the leader end of the CRISPR locus. The Cas1-Cas2 complex introduces staggered nicks into both strands of the CRISPR array near the leader repeat and joins the 5'-ends of the repeat strands with the 3'-ends of the new spacer sequence. Spacer DNA integration requires supercoiled target DNA and 3'-OH ends on the inserted (spacer) DNA and probably initiates with a nucleophilic attack of the C 3'-OH end of the protospacer on the minus strand of the first repeat sequence. Expression of Cas1-Cas2 in a strain lacking both genes permits spacer acquisition. Cas2 not seen to bind DNA alone; the Cas1-Cas2 complex preferentially binds CRISPR-locus DNA. Highest binding is seen to a dual forked DNA complex with 3'-overhangs and a protospacer-adjacent motif-complement specifically positioned. The protospacer DNA lies across a flat surface extending from 1 Cas1 dimer, across the Cas2 dimer and contacting the other Cas1 dimer; the 23 bp-long ds section of the DNA is bracketed by 1 Tyr-22 from each of the Cas1 dimers. Cas1 cuts within the 3'-overhang, to generate a 33-nucleotide DNA that is probably incorporated into the CRISPR leader by a cut-and-paste mechanism. This subunit's probable nuclease activity is not required for spacer acquisition. The chain is CRISPR-associated endoribonuclease Cas2 (ygbF) from Escherichia coli (strain K12).